Here is a 371-residue protein sequence, read N- to C-terminus: Putative glutamate--cysteine ligase 2 (371 aa).

This sequence belongs to the glutamate--cysteine ligase type 2 family. YbdK subfamily.

It catalyses the reaction L-cysteine + L-glutamate + ATP = gamma-L-glutamyl-L-cysteine + ADP + phosphate + H(+). In terms of biological role, ATP-dependent carboxylate-amine ligase which exhibits weak glutamate--cysteine ligase activity. This Burkholderia ambifaria (strain MC40-6) protein is Putative glutamate--cysteine ligase 2.